The sequence spans 60 residues: UPF0291 protein Nther_1806 (60 aa).

Belongs to the UPF0291 family.

It is found in the cytoplasm. This is UPF0291 protein Nther_1806 from Natranaerobius thermophilus (strain ATCC BAA-1301 / DSM 18059 / JW/NM-WN-LF).